We begin with the raw amino-acid sequence, 227 residues long: Phosphatidylserine decarboxylase proenzyme (227 aa).

Residue Ser-181 is the Schiff-base intermediate with substrate; via pyruvic acid of the active site. At Ser-181 the chain carries Pyruvic acid (Ser); by autocatalysis.

The protein belongs to the phosphatidylserine decarboxylase family. PSD-A subfamily. In terms of assembly, heterodimer of a large membrane-associated beta subunit and a small pyruvoyl-containing alpha subunit. Pyruvate serves as cofactor. In terms of processing, is synthesized initially as an inactive proenzyme. Formation of the active enzyme involves a self-maturation process in which the active site pyruvoyl group is generated from an internal serine residue via an autocatalytic post-translational modification. Two non-identical subunits are generated from the proenzyme in this reaction, and the pyruvate is formed at the N-terminus of the alpha chain, which is derived from the carboxyl end of the proenzyme. The post-translation cleavage follows an unusual pathway, termed non-hydrolytic serinolysis, in which the side chain hydroxyl group of the serine supplies its oxygen atom to form the C-terminus of the beta chain, while the remainder of the serine residue undergoes an oxidative deamination to produce ammonia and the pyruvoyl prosthetic group on the alpha chain.

It is found in the cell membrane. The catalysed reaction is a 1,2-diacyl-sn-glycero-3-phospho-L-serine + H(+) = a 1,2-diacyl-sn-glycero-3-phosphoethanolamine + CO2. It functions in the pathway phospholipid metabolism; phosphatidylethanolamine biosynthesis; phosphatidylethanolamine from CDP-diacylglycerol: step 2/2. Catalyzes the formation of phosphatidylethanolamine (PtdEtn) from phosphatidylserine (PtdSer). This chain is Phosphatidylserine decarboxylase proenzyme, found in Anaplasma phagocytophilum (strain HZ).